A 417-amino-acid polypeptide reads, in one-letter code: MAVCARGLRCLGTPAVSLRLAASRSYATTTPPDPAIPNTPGAAATSSPAKRPRTSFQDKLNAGPSFSDFLSDKDDARILDPAEAYALKTALVGPKGKKKEYTRLPPWLKTSIPDSNNYKRIKNDLRGLNLHTVCEEARCPNISECWGGGSKSAATATIMLMGDTCTRGCRFCSVKTSKAPPPLDPHEPENTAEALSRWGLGYVVMTSVDRDDLPDGGARHWAETVMKIKQKAPNILVECLTGDFDGNLEMVALVAKSGLDVYAHNVETVEALTPQVRDRRAGFQKSIRVLKAAKAAQPSLITKTSMMLGLGETEEQMWDALRQLRAADIDVVTFGQYMRPTKRHMPVHEYVRPDVFEFWKEKALEMGFLYCASGPLVRSSYKAGEAFIENVLKKRRAESTGPGSASVQDVATGDLVR.

A mitochondrion-targeting transit peptide spans 1 to 26 (MAVCARGLRCLGTPAVSLRLAASRSY). Residues 27–61 (ATTTPPDPAIPNTPGAAATSSPAKRPRTSFQDKLN) are disordered. Residues 44–58 (ATSSPAKRPRTSFQD) show a composition bias toward polar residues. Positions 134, 139, 145, 165, 169, 172, and 380 each coordinate [4Fe-4S] cluster. The Radical SAM core domain occupies 148-369 (GGSKSAATAT…KEKALEMGFL (222 aa)). The disordered stretch occupies residues 398–417 (ESTGPGSASVQDVATGDLVR).

It belongs to the radical SAM superfamily. Lipoyl synthase family. It depends on [4Fe-4S] cluster as a cofactor.

It localises to the mitochondrion. The catalysed reaction is [[Fe-S] cluster scaffold protein carrying a second [4Fe-4S](2+) cluster] + N(6)-octanoyl-L-lysyl-[protein] + 2 oxidized [2Fe-2S]-[ferredoxin] + 2 S-adenosyl-L-methionine + 4 H(+) = [[Fe-S] cluster scaffold protein] + N(6)-[(R)-dihydrolipoyl]-L-lysyl-[protein] + 4 Fe(3+) + 2 hydrogen sulfide + 2 5'-deoxyadenosine + 2 L-methionine + 2 reduced [2Fe-2S]-[ferredoxin]. It functions in the pathway protein modification; protein lipoylation via endogenous pathway; protein N(6)-(lipoyl)lysine from octanoyl-[acyl-carrier-protein]: step 2/2. In terms of biological role, catalyzes the radical-mediated insertion of two sulfur atoms into the C-6 and C-8 positions of the octanoyl moiety bound to the lipoyl domains of lipoate-dependent enzymes, thereby converting the octanoylated domains into lipoylated derivatives. The protein is Lipoyl synthase, mitochondrial of Uncinocarpus reesii (strain UAMH 1704).